The following is a 359-amino-acid chain: tRNA N6-adenosine threonylcarbamoyltransferase (359 aa).

Residues His115 and His119 each contribute to the Fe cation site. Substrate-binding positions include Leu137 to Gly141, Asp170, Gly183, and Asn283. Fe cation is bound at residue Asp311. The tract at residues Ala328–Ala359 is disordered.

This sequence belongs to the KAE1 / TsaD family. Requires Fe(2+) as cofactor.

It localises to the cytoplasm. The enzyme catalyses L-threonylcarbamoyladenylate + adenosine(37) in tRNA = N(6)-L-threonylcarbamoyladenosine(37) in tRNA + AMP + H(+). Required for the formation of a threonylcarbamoyl group on adenosine at position 37 (t(6)A37) in tRNAs that read codons beginning with adenine. Is involved in the transfer of the threonylcarbamoyl moiety of threonylcarbamoyl-AMP (TC-AMP) to the N6 group of A37, together with TsaE and TsaB. TsaD likely plays a direct catalytic role in this reaction. The chain is tRNA N6-adenosine threonylcarbamoyltransferase from Brucella canis (strain ATCC 23365 / NCTC 10854 / RM-666).